Reading from the N-terminus, the 161-residue chain is uncharacterized protein (161 aa).

An RING-type zinc finger spans residues 72–134 (CAICLDNLQN…EAQQTCPTCR (63 aa)). The disordered stretch occupies residues 140-161 (DKEVEEEERQRNLEELHDSMYG).

This is an uncharacterized protein from Caenorhabditis elegans.